The following is a 228-amino-acid chain: DNA repair and recombination protein RadB (228 aa).

It belongs to the eukaryotic RecA-like protein family. RadB subfamily.

In terms of biological role, involved in DNA repair and in homologous recombination. May regulate the cleavage reactions of the branch-structured DNA. Has a very weak ATPase activity that is not stimulated by DNA. Binds DNA but does not promote DNA strands exchange. In Thermococcus sibiricus (strain DSM 12597 / MM 739), this protein is DNA repair and recombination protein RadB.